A 632-amino-acid polypeptide reads, in one-letter code: 2-oxoacid:ferredoxin oxidoreductase subunit alpha (632 aa).

A YPITP motif motif is present at residues 253–257 (YPITP). Residues T256 and R344 each contribute to the substrate site.

Heterodimer composed of an alpha and a beta subunit.

It is found in the cytoplasm. It catalyses the reaction a 2-oxocarboxylate + 2 oxidized [2Fe-2S]-[ferredoxin] + CoA = an acyl-CoA + 2 reduced [2Fe-2S]-[ferredoxin] + CO2 + H(+). Functionally, catalyzes the coenzyme A-dependent oxidative decarboxylation of different 2-oxoacids such as 2-oxoglutarate, pyruvate and 2-oxobutyrate to form their CoA derivatives. This is 2-oxoacid:ferredoxin oxidoreductase subunit alpha from Sulfolobus sp.